Consider the following 344-residue polypeptide: Methylthioribose-1-phosphate isomerase (344 aa).

Substrate contacts are provided by residues 55 to 57 (RGA), Arg-98, and Gln-202. Catalysis depends on Asp-243, which acts as the Proton donor. Position 253–254 (253–254 (NK)) interacts with substrate.

Belongs to the eIF-2B alpha/beta/delta subunits family. MtnA subfamily.

The catalysed reaction is 5-(methylsulfanyl)-alpha-D-ribose 1-phosphate = 5-(methylsulfanyl)-D-ribulose 1-phosphate. The protein operates within amino-acid biosynthesis; L-methionine biosynthesis via salvage pathway; L-methionine from S-methyl-5-thio-alpha-D-ribose 1-phosphate: step 1/6. Its function is as follows. Catalyzes the interconversion of methylthioribose-1-phosphate (MTR-1-P) into methylthioribulose-1-phosphate (MTRu-1-P). The polypeptide is Methylthioribose-1-phosphate isomerase (Gemmatimonas aurantiaca (strain DSM 14586 / JCM 11422 / NBRC 100505 / T-27)).